Here is a 376-residue protein sequence, read N- to C-terminus: TATA box-binding protein-like 2 (376 aa).

The segment at 103–184 (PDEVTQENKD…SDSLSLASIT (82 aa)) is disordered. Over residues 108–122 (QENKDQPVISKHETE) the composition is skewed to basic and acidic residues. Low complexity predominate over residues 126 to 159 (ESQSPQSRLPSPSEQDVGLGLNSSSLSNSHSQLH). Polar residues predominate over residues 175–184 (SDSLSLASIT).

The protein belongs to the TBP family. In terms of assembly, interacts with TAF3.

Its subcellular location is the cytoplasm. It is found in the nucleus. In terms of biological role, transcription factor required in complex with TAF3 for the differentiation of myoblasts into myocytes. The complex replaces TFIID at specific promoters at an early stage in the differentiation process. This chain is TATA box-binding protein-like 2, found in Pan troglodytes (Chimpanzee).